A 709-amino-acid polypeptide reads, in one-letter code: G1/S-specific cyclin-E (709 aa).

Disordered regions lie at residues 1 to 30 (MGLN…NGEV), 43 to 149 (ISSS…NLSS), 162 to 205 (VDGQ…GSKQ), 221 to 289 (TVVT…PKHQ), and 642 to 709 (ALRA…RSNP). 3 stretches are compositionally biased toward polar residues: residues 7 to 29 (SVCS…SNGE), 61 to 70 (PSTSFSSASQ), and 91 to 106 (CDSQ…TSNG). Phosphoserine is present on residues Ser114, Ser115, Ser117, and Ser129. Residues 162-175 (VDGQSTQELLSIRS) are compositionally biased toward polar residues. 4 positions are modified to phosphoserine: Ser187, Ser192, Ser195, and Ser198. Over residues 187–199 (SPLPDSPDSPPSP) the composition is skewed to pro residues. Positions 228 to 258 (EDDDLLDDSCEDYSYDEDDEDDVEEEDDDVE) are enriched in acidic residues. The segment covering 260-277 (YSSTISPASSGCSQQQAV) has biased composition (polar residues). Position 651 is a phosphothreonine (Thr651). The span at 677 to 709 (SSTTTCCNTAASNKGGKSSSNNSVTSCSSRSNP) shows a compositional bias: low complexity.

Belongs to the cyclin family. Cyclin E subfamily. As to quaternary structure, interacts with a member of the CDK2/CDK protein kinases to form a serine/threonine kinase holoenzyme complex. The cyclin subunit imparts substrate specificity to the complex. Interacts (via C-terminus) with Z600 (via C-terminus). Isoform II is ubiquitous in early embryos and, prior to mitosis 14, is rapidly degraded in all cells except the pole (germ) cells. Expressed during G1 phase in proliferating peripheral nervous system cells. Constitutive expression in embryonic cycles lacking a G1 phase.

The protein localises to the nucleus. Functionally, essential for the control of the cell cycle at the G1/S (start) transition. Targeted by archipelago for degradation by the SFC ubiquitin ligase complex. The polypeptide is G1/S-specific cyclin-E (CycE) (Drosophila melanogaster (Fruit fly)).